The following is a 661-amino-acid chain: Putative lipase ATG15 (661 aa).

The Cytoplasmic portion of the chain corresponds to 1-3; the sequence is MIW. The helical; Signal-anchor for type II membrane protein transmembrane segment at 4–24 threads the bilayer; the sequence is NGRLVLACVLLIAGCSGQVDA. The Lumenal segment spans residues 25–661; sequence ARTREQRKAF…FDDFDPKNDL (637 aa). 5 N-linked (GlcNAc...) asparagine glycosylation sites follow: Asn155, Asn190, Asn212, Asn271, and Asn295. Residue Ser311 is the Charge relay system of the active site. Asn457 carries N-linked (GlcNAc...) asparagine glycosylation. Disordered regions lie at residues 492–559 and 574–597; these read ESTT…TSTS and TTTS…TTTS. Low complexity-rich tracts occupy residues 493–513, 527–559, and 574–595; these read STTS…STRT, TTTS…TSTS, and TTTS…TKTT.

It belongs to the AB hydrolase superfamily. Lipase family. Binds to both phosphatidylinositol (PI) and phosphatidylinositol 3,5-bisphosphate (PIP2).

Its subcellular location is the endosome. It is found in the multivesicular body membrane. The protein localises to the prevacuolar compartment membrane. It catalyses the reaction a triacylglycerol + H2O = a diacylglycerol + a fatty acid + H(+). Functionally, lipase which is essential for lysis of subvacuolar cytoplasm to vacuole targeted bodies and intravacuolar autophagic bodies. Involved in the lysis of intravacuolar multivesicular body (MVB) vesicles. The intravacuolar membrane disintegration by ATG15 is critical to life span extension. This chain is Putative lipase ATG15 (ATG15), found in Passalora fulva (Tomato leaf mold).